The chain runs to 211 residues: Imidazole glycerol phosphate synthase subunit HisH (211 aa).

Positions 3 to 211 (VIAVIDYDMG…VNQIRVKAIA (209 aa)) constitute a Glutamine amidotransferase type-1 domain. The active-site Nucleophile is Cys-81. Active-site residues include His-186 and Glu-188.

Heterodimer of HisH and HisF.

The protein localises to the cytoplasm. It catalyses the reaction 5-[(5-phospho-1-deoxy-D-ribulos-1-ylimino)methylamino]-1-(5-phospho-beta-D-ribosyl)imidazole-4-carboxamide + L-glutamine = D-erythro-1-(imidazol-4-yl)glycerol 3-phosphate + 5-amino-1-(5-phospho-beta-D-ribosyl)imidazole-4-carboxamide + L-glutamate + H(+). The enzyme catalyses L-glutamine + H2O = L-glutamate + NH4(+). The protein operates within amino-acid biosynthesis; L-histidine biosynthesis; L-histidine from 5-phospho-alpha-D-ribose 1-diphosphate: step 5/9. IGPS catalyzes the conversion of PRFAR and glutamine to IGP, AICAR and glutamate. The HisH subunit catalyzes the hydrolysis of glutamine to glutamate and ammonia as part of the synthesis of IGP and AICAR. The resulting ammonia molecule is channeled to the active site of HisF. The polypeptide is Imidazole glycerol phosphate synthase subunit HisH (Gloeothece citriformis (strain PCC 7424) (Cyanothece sp. (strain PCC 7424))).